Here is a 1007-residue protein sequence, read N- to C-terminus: Glutamate receptor ionotropic, delta-2 (1007 aa).

Residues 1–23 (MEVFPLLFFLSFWWSRTWDLATS) form the signal peptide. The tract at residues 24 to 345 (DSIIHIGAIF…NAFHKKLEDR (322 aa)) is interaction with CBLN1 homotrimer. The Extracellular segment spans residues 24-566 (DSIIHIGAIF…DMFACLAPFD (543 aa)). Cystine bridges form between C83-C355, C99-C131, and C298-C310. N-linked (GlcNAc...) asparagine glycosylation is present at N293. N426 is a glycosylation site (N-linked (GlcNAc...) asparagine). Residues 567-587 (LSLWACIAGTVLLVGLLVYLL) traverse the membrane as a helical segment. Topologically, residues 588–635 (NWLNPPRLQMGSMTSTTLYNSMWFVYGSFVQQGGEVPYTTLATRMMMG) are cytoplasmic. A helical transmembrane segment spans residues 636–656 (AWWLFALIVISSYTANLAAFL). Topologically, residues 657–830 (TITRIESSIQ…QKGGALDIKS (174 aa)) are extracellular. N-linked (GlcNAc...) asparagine glycosylation is found at N713 and N716. The chain crosses the membrane as a helical span at residues 831-851 (LAGVFCILAAGIVLSCLIAVL). Residues 852–1007 (ETWWSRRKGS…GNDPDRGTSI (156 aa)) lie on the Cytoplasmic side of the membrane. S883 is subject to Phosphoserine. T886 is modified (phosphothreonine). S890 bears the Phosphoserine mark. Residues 921-991 (DFRNTHITTT…MSSIPYQPTP (71 aa)) are interaction with AP4M1. Residues 1005–1007 (TSI) carry the PDZ-binding motif. Position 1006 is a phosphoserine (S1006).

It belongs to the glutamate-gated ion channel (TC 1.A.10.1) family. GRID2 subfamily. As to quaternary structure, tetramer; dimer of dimers. Interacts with AP4M1. Interacts with EML2. Interacts with MAGI2 (via PDZ domains). Interacts with BECN1, GOPC, GRID2IP, SHANK1 and SHANK2. Interacts with CBLN2, but not with CBLN4. Interacts with CBLN1 (via C1q domain); the interaction is CBLN1-NRX1 complex formation-dependent; CBLN1-binding is calcium-independent; CBLN1 hexamers anchor GRID2 N-terminal domain dimers to monomeric NRXN1 isoform beta; promotes synaptogenesis and mediates the D-Serine-dependent long term depression signals and AMPA receptor endocytosis. Expressed at high levels in the cerebellar Purkinje cell layer, almost absent in the forebrain.

It is found in the postsynaptic cell membrane. It catalyses the reaction Ca(2+)(in) = Ca(2+)(out). It carries out the reaction Na(+)(in) = Na(+)(out). Its function is as follows. Member of the ionotropic glutamate receptor family, which plays a crucial role in synaptic organization and signal transduction in the central nervous system. Although it shares structural features with ionotropic glutamate receptors, does not bind glutamate as a primary ligand. Promotes synaptogenesis and mediates the D-Serine-dependent long term depression signals and AMPA receptor endocytosis of cerebellar parallel fiber-Purkinje cell (PF-PC) synapses through the NRX1B-CBLN1-GRID2 triad complex. In the presence of neurexins and cerebellins, forms cation-selective channels that are proposed to be gated by glycine and D-serine. However, recent research disputes this ligand-gated cation channel activity. Cation-selective ion channel activity can be triggered by GRM1 in Purkinje cells. The sequence is that of Glutamate receptor ionotropic, delta-2 (Grid2) from Rattus norvegicus (Rat).